Here is a 240-residue protein sequence, read N- to C-terminus: Urease accessory protein UreF (240 aa).

Belongs to the UreF family. In terms of assembly, ureD, UreF and UreG form a complex that acts as a GTP-hydrolysis-dependent molecular chaperone, activating the urease apoprotein by helping to assemble the nickel containing metallocenter of UreC. The UreE protein probably delivers the nickel.

The protein localises to the cytoplasm. Functionally, required for maturation of urease via the functional incorporation of the urease nickel metallocenter. This chain is Urease accessory protein UreF, found in Rhodopseudomonas palustris (strain TIE-1).